Consider the following 342-residue polypeptide: 29 kDa ribonucleoprotein, chloroplastic (342 aa).

The transit peptide at 1–65 directs the protein to the chloroplast; it reads MSASASSLSA…PAEYPSRFVR (65 aa). The RRM 1 domain maps to 99 to 177; it reads LKLFVGNLSF…RPLRVNAGPP (79 aa). Phosphoserine is present on residues serine 107 and serine 204. Positions 167-255 are disordered; sequence GRPLRVNAGP…GSGSGSGSGS (89 aa). A linker (Gly-rich) region spans residues 178–256; that stretch reads PPKREESFSR…SGSGSGSGSG (79 aa). Gly residues-rich tracts occupy residues 190–237 and 245–255; these read RSGG…GYGG and SGSGSGSGSGS. An RRM 2 domain is found at 257 to 335; that stretch reads NRLYVGNLSW…RQIRVSEAEA (79 aa).

It localises to the plastid. The protein localises to the chloroplast. Its function is as follows. Stabilizes specific chloroplast mRNAs. Required for normal chloroplast development under cold stress conditions by stabilizing transcripts of numerous mRNAs under these conditions. This is 29 kDa ribonucleoprotein, chloroplastic from Arabidopsis thaliana (Mouse-ear cress).